Consider the following 450-residue polypeptide: tRNA modification GTPase MnmE (450 aa).

(6S)-5-formyl-5,6,7,8-tetrahydrofolate-binding residues include Arg20, Glu78, and Lys117. Residues 211–372 (GLRMVIVGKP…LEESIYRETQ (162 aa)) enclose the TrmE-type G domain. K(+) is bound at residue Asn221. GTP contacts are provided by residues 221 to 226 (NVGKST), 240 to 246 (TDIPGTT), and 265 to 268 (DTAG). Ser225 serves as a coordination point for Mg(2+). K(+) is bound by residues Thr240, Ile242, and Thr245. Residue Thr246 participates in Mg(2+) binding. Lys450 serves as a coordination point for (6S)-5-formyl-5,6,7,8-tetrahydrofolate.

This sequence belongs to the TRAFAC class TrmE-Era-EngA-EngB-Septin-like GTPase superfamily. TrmE GTPase family. As to quaternary structure, homodimer. Heterotetramer of two MnmE and two MnmG subunits. Requires K(+) as cofactor.

The protein resides in the cytoplasm. Its function is as follows. Exhibits a very high intrinsic GTPase hydrolysis rate. Involved in the addition of a carboxymethylaminomethyl (cmnm) group at the wobble position (U34) of certain tRNAs, forming tRNA-cmnm(5)s(2)U34. In Thermotoga sp. (strain RQ2), this protein is tRNA modification GTPase MnmE.